Consider the following 94-residue polypeptide: Ribonuclease P protein component 1 (94 aa).

Belongs to the eukaryotic/archaeal RNase P protein component 1 family. In terms of assembly, consists of a catalytic RNA component and at least 4-5 protein subunits.

Its subcellular location is the cytoplasm. The catalysed reaction is Endonucleolytic cleavage of RNA, removing 5'-extranucleotides from tRNA precursor.. In terms of biological role, part of ribonuclease P, a protein complex that generates mature tRNA molecules by cleaving their 5'-ends. The protein is Ribonuclease P protein component 1 of Haloarcula marismortui (strain ATCC 43049 / DSM 3752 / JCM 8966 / VKM B-1809) (Halobacterium marismortui).